We begin with the raw amino-acid sequence, 164 residues long: Peptide methionine sulfoxide reductase MsrA (164 aa).

C16 is a catalytic residue.

It belongs to the MsrA Met sulfoxide reductase family.

It carries out the reaction L-methionyl-[protein] + [thioredoxin]-disulfide + H2O = L-methionyl-(S)-S-oxide-[protein] + [thioredoxin]-dithiol. The enzyme catalyses [thioredoxin]-disulfide + L-methionine + H2O = L-methionine (S)-S-oxide + [thioredoxin]-dithiol. Functionally, has an important function as a repair enzyme for proteins that have been inactivated by oxidation. Catalyzes the reversible oxidation-reduction of methionine sulfoxide in proteins to methionine. In Clostridium tetani (strain Massachusetts / E88), this protein is Peptide methionine sulfoxide reductase MsrA.